Reading from the N-terminus, the 454-residue chain is Neuronal acetylcholine receptor subunit alpha-5 (454 aa).

A disordered region spans residues 1-26 (MPLRARSRKPGAGPAARAPQAGVSEP). Positions 1 to 29 (MPLRARSRKPGAGPAARAPQAGVSEPSFV) are cleaved as a signal peptide. The segment covering 10–22 (PGAGPAARAPQAG) has biased composition (low complexity). The Extracellular portion of the chain corresponds to 30–240 (AKSEDRLFKH…IIRRLPLFYT (211 aa)). N55, N169, and N215 each carry an N-linked (GlcNAc...) asparagine glycan. C156 and C170 are oxidised to a cystine. Residues C220 and C221 are joined by a disulfide bond. The next 3 membrane-spanning stretches (helical) occupy residues 241–261 (LFLIIPCIGLSFLTVLVFYLP), 270–290 (LCTSVLVSLTVFLLVIEEIIP), and 303–323 (LVFTMIFVTLSIVITVFAINI). At 324-416 (HHRSSSTHNA…KFIAQVLDRM (93 aa)) the chain is on the cytoplasmic side. Residues 417-437 (FLWAFLLVSIIGSLVLFIPVI) traverse the membrane as a helical segment. The Extracellular portion of the chain corresponds to 438–454 (HKWASIIVPVHIGSTNT).

This sequence belongs to the ligand-gated ion channel (TC 1.A.9) family. Acetylcholine receptor (TC 1.A.9.1) subfamily. Alpha-5/CHRNA5 sub-subfamily. Neuronal AChR that forms heteropentamers composed of two different type of subunits: alpha and non-alpha (beta). CHRNA5/alpha-5 subunit is only able to form functional nAChRs when co-assembled with another alpha subunit, can be combined to CHRNA4/alpha-4 or CHRNA3/alpha-3 and CHRNB4/beta-4 or CHRNB2/beta-2 to give rise to functional receptors. Interacts with LYPD6.

Its subcellular location is the synaptic cell membrane. The protein resides in the cell membrane. The enzyme catalyses Ca(2+)(in) = Ca(2+)(out). The catalysed reaction is K(+)(in) = K(+)(out). It carries out the reaction Na(+)(in) = Na(+)(out). Its activity is regulated as follows. Activated by a myriad of ligands such as acetylcholine, cytisine, nicotine, choline and epibatidine. Functionally, component of neuronal acetylcholine receptors (nAChRs) that function as pentameric, ligand-gated cation channels with high calcium permeability among other activities. nAChRs are excitatory neurotrasnmitter receptors formed by a collection of nAChR subunits known to mediate synaptic transmission in the nervous system and the neuromuscular junction. Each nAchR subunit confers differential attributes to channel properties, including activation, deactivation and desensitization kinetics, pH sensitivity, cation permeability, and binding to allosteric modulators. Has an accessory rather than functional role and is only able to form functional nAChRs when co-assembled with another beta subunit. Participates in pentameric assemblies along with CHRNA3, CHRNA4, CHRNB2 and CHRNB4. Increases receptor sensitivity to acetylcholine and nicotine when associated with CHRNA4 and CHRNB2. Plays a role in nicotine addiction. The chain is Neuronal acetylcholine receptor subunit alpha-5 (CHRNA5) from Gallus gallus (Chicken).